Consider the following 119-residue polypeptide: Large ribosomal subunit protein uL22 (119 aa).

It belongs to the universal ribosomal protein uL22 family. In terms of assembly, part of the 50S ribosomal subunit.

Functionally, this protein binds specifically to 23S rRNA; its binding is stimulated by other ribosomal proteins, e.g. L4, L17, and L20. It is important during the early stages of 50S assembly. It makes multiple contacts with different domains of the 23S rRNA in the assembled 50S subunit and ribosome. The globular domain of the protein is located near the polypeptide exit tunnel on the outside of the subunit, while an extended beta-hairpin is found that lines the wall of the exit tunnel in the center of the 70S ribosome. In Chlorobaculum tepidum (strain ATCC 49652 / DSM 12025 / NBRC 103806 / TLS) (Chlorobium tepidum), this protein is Large ribosomal subunit protein uL22.